A 384-amino-acid chain; its full sequence is 1-deoxy-D-xylulose 5-phosphate reductoisomerase (384 aa).

NADPH-binding residues include Thr-10, Gly-11, Ser-12, Ile-13, Arg-37, Asn-38, and Asn-124. A 1-deoxy-D-xylulose 5-phosphate-binding site is contributed by Lys-125. Glu-126 lines the NADPH pocket. A Mn(2+)-binding site is contributed by Asp-150. Residues Ser-151, Glu-152, Ser-176, and His-199 each coordinate 1-deoxy-D-xylulose 5-phosphate. Position 152 (Glu-152) interacts with Mn(2+). Position 205 (Gly-205) interacts with NADPH. 1-deoxy-D-xylulose 5-phosphate contacts are provided by Ser-212, Asn-217, Lys-218, and Glu-221. Residue Glu-221 participates in Mn(2+) binding.

The protein belongs to the DXR family. Requires Mg(2+) as cofactor. Mn(2+) serves as cofactor.

The catalysed reaction is 2-C-methyl-D-erythritol 4-phosphate + NADP(+) = 1-deoxy-D-xylulose 5-phosphate + NADPH + H(+). It participates in isoprenoid biosynthesis; isopentenyl diphosphate biosynthesis via DXP pathway; isopentenyl diphosphate from 1-deoxy-D-xylulose 5-phosphate: step 1/6. Functionally, catalyzes the NADPH-dependent rearrangement and reduction of 1-deoxy-D-xylulose-5-phosphate (DXP) to 2-C-methyl-D-erythritol 4-phosphate (MEP). The polypeptide is 1-deoxy-D-xylulose 5-phosphate reductoisomerase (Clostridium perfringens (strain SM101 / Type A)).